We begin with the raw amino-acid sequence, 390 residues long: MPVLTDPVQLLQALIRCPSITPNEAGALSILEQFLRKMGFSVERPIFSDKNTADVENLYAKMGNKGPHLMFAGHSDVVPPGELDNWMYPPFEGIINQGKIYGRGAVDMKGAIACFIAALARVLEKQPIKGAVSLLITGDEEGPAINGTVKLLKWAAQKGEKWNAAIVGEPTSVKRVGDMIKIGRRGSISGIITVKGRQGHVAFPERAANPLPLAHKLIQALTDTALDQGTKNFQASNLELTTIDTGNSATNIIPAQTVIRFNIRYNDLWTKEALIAEIEKRLALVHSENNSNQYPYYQLEWIQNLGSVFLIKNDHLIEILSNAIEIVTGKRPECSTSGGTSDARFIKDYCPVVEFGLPGNTMHMVDECVTLDAMESLTVIYERFIIDFFA.

Zn(2+) is bound at residue His-74. Residue Asp-76 is part of the active site. Asp-107 contacts Zn(2+). Glu-140 (proton acceptor) is an active-site residue. Positions 141, 169, and 363 each coordinate Zn(2+).

It belongs to the peptidase M20A family. DapE subfamily. In terms of assembly, homodimer. Zn(2+) serves as cofactor. The cofactor is Co(2+).

It carries out the reaction N-succinyl-(2S,6S)-2,6-diaminopimelate + H2O = (2S,6S)-2,6-diaminopimelate + succinate. Its pathway is amino-acid biosynthesis; L-lysine biosynthesis via DAP pathway; LL-2,6-diaminopimelate from (S)-tetrahydrodipicolinate (succinylase route): step 3/3. Its function is as follows. Catalyzes the hydrolysis of N-succinyl-L,L-diaminopimelic acid (SDAP), forming succinate and LL-2,6-diaminopimelate (DAP), an intermediate involved in the bacterial biosynthesis of lysine and meso-diaminopimelic acid, an essential component of bacterial cell walls. This chain is Succinyl-diaminopimelate desuccinylase, found in Bartonella bacilliformis (strain ATCC 35685 / KC583 / Herrer 020/F12,63).